We begin with the raw amino-acid sequence, 227 residues long: PKHD-type hydroxylase ACIAD0531 (227 aa).

One can recognise a Fe2OG dioxygenase domain in the interval 78 to 178 (HIIPPLFNRY…RFASFFWVQS (101 aa)). 3 residues coordinate Fe cation: histidine 96, aspartate 98, and histidine 159. Residue arginine 169 coordinates 2-oxoglutarate.

Fe(2+) is required as a cofactor. Requires L-ascorbate as cofactor.

This Acinetobacter baylyi (strain ATCC 33305 / BD413 / ADP1) protein is PKHD-type hydroxylase ACIAD0531.